Here is a 551-residue protein sequence, read N- to C-terminus: ATP synthase subunit alpha, mitochondrial (551 aa).

An ATP-binding site is contributed by 210-217; sequence GDRQTGKT.

It belongs to the ATPase alpha/beta chains family. In terms of assembly, F-type ATPases have 2 components, CF(1) - the catalytic core - and CF(0) - the membrane proton channel. CF(1) has five subunits: alpha(3), beta(3), gamma(1), delta(1), epsilon(1). CF(0) has three main subunits: a, b and c.

It is found in the mitochondrion. The protein resides in the mitochondrion inner membrane. Mitochondrial membrane ATP synthase (F(1)F(0) ATP synthase or Complex V) produces ATP from ADP in the presence of a proton gradient across the membrane which is generated by electron transport complexes of the respiratory chain. F-type ATPases consist of two structural domains, F(1) - containing the extramembraneous catalytic core, and F(0) - containing the membrane proton channel, linked together by a central stalk and a peripheral stalk. During catalysis, ATP synthesis in the catalytic domain of F(1) is coupled via a rotary mechanism of the central stalk subunits to proton translocation. Subunits alpha and beta form the catalytic core in F(1). Rotation of the central stalk against the surrounding alpha(3)beta(3) subunits leads to hydrolysis of ATP in three separate catalytic sites on the beta subunits. Subunit alpha does not bear the catalytic high-affinity ATP-binding sites. The chain is ATP synthase subunit alpha, mitochondrial (atp-1) from Neurospora crassa (strain ATCC 24698 / 74-OR23-1A / CBS 708.71 / DSM 1257 / FGSC 987).